The primary structure comprises 140 residues: Small ribosomal subunit protein eS12 (140 aa).

The protein belongs to the eukaryotic ribosomal protein eS12 family. Part of the small subunit (SSU) processome, composed of more than 70 proteins and the RNA chaperone small nucleolar RNA (snoRNA) U3. Subunit of the 40S ribosomal complex.

The protein localises to the nucleus. It localises to the nucleolus. In terms of biological role, part of the small subunit (SSU) processome, first precursor of the small eukaryotic ribosomal subunit. During the assembly of the SSU processome in the nucleolus, many ribosome biogenesis factors, an RNA chaperone and ribosomal proteins associate with the nascent pre-rRNA and work in concert to generate RNA folding, modifications, rearrangements and cleavage as well as targeted degradation of pre-ribosomal RNA by the RNA exosome. Subunit of the 40S ribosomal complex. Involved in cold-warm shock-induced translocation of the RNA exosome components from the nucleolus to nucleoplasm. The polypeptide is Small ribosomal subunit protein eS12 (rps-12) (Caenorhabditis elegans).